Consider the following 130-residue polypeptide: Classical arabinogalactan protein 7 (130 aa).

The N-terminal stretch at 1–21 (MNSKIIEAFFIVALFTTSCLA) is a signal peptide. Position 22 is a pyrrolidone carboxylic acid (Gln-22). A disordered region spans residues 22–108 (QAPAPSPTTT…DASAPPPNAA (87 aa)). 4-hydroxyproline is present on residues Pro-24, Pro-26, Pro-28, Pro-35, and Pro-36. 5 O-linked (Ara...) hydroxyproline glycosylation sites follow: Pro-24, Pro-26, Pro-28, Pro-35, and Pro-36. Positions 33–68 (TPPPVATPPPAATPAPTTTPPPAVSPAPTSSPPSSA) are enriched in pro residues. The GPI-anchor amidated asparagine moiety is linked to residue Asn-106. Residues 107–130 (AALTNKAFVVGSLVAAIIYAVVLA) constitute a propeptide, removed in mature form.

This sequence belongs to the classical AGP family. In terms of processing, O-glycosylated on hydroxyprolines; noncontiguous hydroxylproline residues are glycosylated with arabinogalactan.

It localises to the cell membrane. Its function is as follows. Proteoglycan that seems to be implicated in diverse developmental roles such as differentiation, cell-cell recognition, embryogenesis and programmed cell death. The sequence is that of Classical arabinogalactan protein 7 (AGP7) from Arabidopsis thaliana (Mouse-ear cress).